The chain runs to 444 residues: Magnesium transporter MRS2-F (444 aa).

The disordered stretch occupies residues 128–155 (FTDMEGESSAVTSPFPALTSTTPNELEM). A compositionally biased stretch (polar residues) spans 145 to 155 (LTSTTPNELEM). The stretch at 195 to 258 (VCLESACRSL…QKVRDELEHL (64 aa)) forms a coiled coil. The chain crosses the membrane as a helical span at residues 370-390 (GVMLSTATVVITAGVAVVGLF). The Required for magnesium transport activity signature appears at 391–393 (GMN). The chain crosses the membrane as a helical span at residues 415–435 (FWETTLGTIAGCTVMYIVAMG).

Belongs to the CorA metal ion transporter (MIT) (TC 1.A.35.5) family.

The protein resides in the membrane. In terms of biological role, magnesium transporter that may mediate the influx of magnesium. The chain is Magnesium transporter MRS2-F (MRS2-F) from Oryza sativa subsp. indica (Rice).